Reading from the N-terminus, the 687-residue chain is Protein-glutamine gamma-glutamyltransferase 2 (687 aa).

Ala-2 carries the N-acetylalanine modification. Residue Ser-60 is modified to Phosphoserine. 2 disulfides stabilise this stretch: Cys-230/Cys-370 and Cys-370/Cys-371. Catalysis depends on residues Cys-277, His-335, and Asp-358. Residues Asn-398, Asp-400, Glu-437, Glu-447, and Glu-452 each coordinate Ca(2+). Residue Lys-468 is modified to N6-acetyllysine. 476–483 (RIRVGQSM) contributes to the GTP binding site. Glu-539 provides a ligand contact to Ca(2+). Residue 580-583 (RDLY) participates in GTP binding. Gln-633 participates in a covalent cross-link: Isoglutamyl lysine isopeptide (Gln-Lys) (interchain with K-?).

It belongs to the transglutaminase superfamily. Transglutaminase family. Monomer. Interacts with phospholipase C; promoting alpha-1 adrenergic receptor signaling. Interacts with PLCD1. In terms of assembly, homooligomer. The cofactor is Ca(2+). Post-translationally, disulfide bond formation inactivates the calcium-dependent acyltransferase activity. Cys-370 can form disulfide bonds with both Cys-230 and Cys-371: formation of a disulfide bond between Cys-230 and Cys-370 facilitates formation of the disulfide between Cys-370 and Cys-371, which promotes inactivation of the acyltransferase activity. May also form interchain disulfids between Cys-230 and Cys-370. Ca(2+) protects against disulfide bond formation and inactivation. Auto-transglutaminated: Forms covalent cross-links mediated by transglutaminase between Gln-633 and the epsilon-amino group of a lysine residue of itself or HMGB1, forming homopolymers and heteropolymers, respectively. In terms of processing, S-nitrosylated, leading to inactivation of the acyltransferase activity.

It localises to the cytoplasm. The protein resides in the cytosol. The protein localises to the nucleus. It is found in the chromosome. Its subcellular location is the secreted. It localises to the extracellular space. The protein resides in the extracellular matrix. The protein localises to the cell membrane. It is found in the mitochondrion. Its subcellular location is the perinuclear region. It carries out the reaction L-glutaminyl-[protein] + L-lysyl-[protein] = [protein]-L-lysyl-N(6)-5-L-glutamyl-[protein] + NH4(+). The enzyme catalyses L-glutaminyl-[protein] + serotonin = 5-serotonyl-L-glutamyl-[protein] + NH4(+). The catalysed reaction is L-glutaminyl-[protein] + dopamine = 5-dopaminyl-L-glutamyl-[protein] + NH4(+). It catalyses the reaction L-glutaminyl-[protein] + histamine = 5-histaminyl-L-glutamyl-[protein] + NH4(+). It carries out the reaction L-glutaminyl-[protein] + (R)-noradrenaline = 5-(R)-noradrenalinyl-L-glutamyl-[protein] + NH4(+). The enzyme catalyses L-glutaminyl-[protein] + H2O = L-glutamyl-[protein] + NH4(+). Its activity is regulated as follows. Acyltransferase activity is regulated by the binding of GTP and Ca(2+): inactivated by GTP, which stabilizes its closed structure, thereby obstructing the accessibility of substrates to the active sites. In contrast, Ca(2+) acts as a cofactor by inducing conformational change to the active open form. In absence of Ca(2+), Mg(2+) may bind Ca(2+)-binding sites, promoting GTP-binding and subsequent inhibition of the acyltransferase activity. Extracellularly reduced and activated by CLIC3. Specifically inhibited by compound VA4 ((S)-Benzyl (6-Acrylamido-1-(4-((5-(dimethylamino)naphthalen-1-yl)sulfonyl)piperazin-1-yl)-1-oxohexan-2-yl)carbamate), which specifically abolishes both the transamidation and GTP-binding activities. In terms of biological role, calcium-dependent acyltransferase that catalyzes the formation of covalent bonds between peptide-bound glutamine and various primary amines, such as gamma-amino group of peptide-bound lysine, or mono- and polyamines, thereby producing cross-linked or aminated proteins, respectively. Involved in many biological processes, such as bone development, angiogenesis, wound healing, cellular differentiation, chromatin modification and apoptosis. Acts as a protein-glutamine gamma-glutamyltransferase by mediating the cross-linking of proteins, such as ACO2, HSPB6, FN1, HMGB1, RAP1GDS1, SLC25A4/ANT1, SPP1 and WDR54. Under physiological conditions, the protein cross-linking activity is inhibited by GTP; inhibition is relieved by Ca(2+) in response to various stresses. When secreted, catalyzes cross-linking of proteins of the extracellular matrix, such as FN1 and SPP1 resulting in the formation of scaffolds. Plays a key role during apoptosis, both by (1) promoting the cross-linking of cytoskeletal proteins resulting in condensation of the cytoplasm, and by (2) mediating cross-linking proteins of the extracellular matrix, resulting in the irreversible formation of scaffolds that stabilize the integrity of the dying cells before their clearance by phagocytosis, thereby preventing the leakage of harmful intracellular components. In addition to protein cross-linking, can use different monoamine substrates to catalyze a vast array of protein post-translational modifications: mediates aminylation of serotonin, dopamine, noradrenaline or histamine into glutamine residues of target proteins to generate protein serotonylation, dopaminylation, noradrenalinylation or histaminylation, respectively. Mediates protein serotonylation of small GTPases during activation and aggregation of platelets, leading to constitutive activation of these GTPases. Plays a key role in chromatin organization by mediating serotonylation and dopaminylation of histone H3. Catalyzes serotonylation of 'Gln-5' of histone H3 (H3Q5ser) during serotonergic neuron differentiation, thereby facilitating transcription. Acts as a mediator of neurotransmission-independent role of nuclear dopamine in ventral tegmental area (VTA) neurons: catalyzes dopaminylation of 'Gln-5' of histone H3 (H3Q5dop), thereby regulating relapse-related transcriptional plasticity in the reward system. Regulates vein remodeling by mediating serotonylation and subsequent inactivation of ATP2A2/SERCA2. Also acts as a protein deamidase by mediating the side chain deamidation of specific glutamine residues of proteins to glutamate. Catalyzes specific deamidation of protein gliadin, a component of wheat gluten in the diet. May also act as an isopeptidase cleaving the previously formed cross-links. Also able to participate in signaling pathways independently of its acyltransferase activity: acts as a signal transducer in alpha-1 adrenergic receptor-mediated stimulation of phospholipase C-delta (PLCD) activity and is required for coupling alpha-1 adrenergic agonists to the stimulation of phosphoinositide lipid metabolism. Functionally, has cytotoxic activity: is able to induce apoptosis independently of its acyltransferase activity. The sequence is that of Protein-glutamine gamma-glutamyltransferase 2 from Homo sapiens (Human).